Here is a 523-residue protein sequence, read N- to C-terminus: Polyamine aminopropyltransferase (523 aa).

A run of 7 helical transmembrane segments spans residues 20 to 40 (VLLAAVAACAACGLVYELALL), 51 to 71 (IVATSLIVAGYIAALGAGALL), 88 to 108 (AVLGIIGGLSAAALYAAFAFL), 116 to 136 (LVLAVGTALIGGLVGAEVPLL), 164 to 184 (LGALVGGLAWPFLLLPQLGMI), 186 to 206 (GAAVTGIVNLAAAGVVSIFLL), and 215 to 235 (LVTALCALAAALGLIATLLVH). Residues 203–478 (IFLLRHVVSG…APTPAVPSTA (276 aa)) form a spermidine synthase region. Residues 231-465 (TLLVHSHDIE…GDWGFALARL (235 aa)) enclose the PABS domain. Residue Gln261 coordinates S-methyl-5'-thioadenosine. Asp313 serves as a coordination point for spermidine. Residues Glu333 and 365–366 (DA) each bind S-methyl-5'-thioadenosine. Asp386 (proton acceptor) is an active-site residue.

This sequence belongs to the spermidine/spermine synthase family. In terms of assembly, homodimer or homotetramer.

The protein localises to the cell membrane. The catalysed reaction is S-adenosyl 3-(methylsulfanyl)propylamine + putrescine = S-methyl-5'-thioadenosine + spermidine + H(+). Its pathway is amine and polyamine biosynthesis; spermidine biosynthesis; spermidine from putrescine: step 1/1. Catalyzes the irreversible transfer of a propylamine group from the amino donor S-adenosylmethioninamine (decarboxy-AdoMet) to putrescine (1,4-diaminobutane) to yield spermidine. The polypeptide is Polyamine aminopropyltransferase (Mycobacterium bovis (strain ATCC BAA-935 / AF2122/97)).